The primary structure comprises 733 residues: Hexamerin (733 aa).

The signal sequence occupies residues 1-17 (MKTALVLILATATLAVA). 3 N-linked (GlcNAc...) asparagine glycosylation sites follow: Asn199, Asn234, and Asn431.

It belongs to the hemocyanin family. As to quaternary structure, homohexamer.

Its subcellular location is the secreted. It is found in the extracellular space. Larval storage protein (LSP) which may serve as a store of amino acids for synthesis of adult proteins. The polypeptide is Hexamerin (Blaberus discoidalis (Tropical cockroach)).